Here is a 478-residue protein sequence, read N- to C-terminus: Early growth response protein 4 (478 aa).

The interval 275-302 (TEGLPALLTPPGGEGGSGGEGGEFLAAP) is disordered. The span at 286 to 296 (GGEGGSGGEGG) shows a compositional bias: gly residues. C2H2-type zinc fingers lie at residues 372 to 396 (FACP…LRIH), 402 to 424 (FQCR…VRTH), and 430 to 452 (FACD…SKVH).

The protein belongs to the EGR C2H2-type zinc-finger protein family.

It localises to the nucleus. Functionally, transcriptional regulator. Recognizes and binds to the DNA sequence 5'-GCGGGGGCG-3' (GSG). Activates the transcription of target genes whose products are required for mitogenesis and differentiation. The chain is Early growth response protein 4 (Egr4) from Mus musculus (Mouse).